The primary structure comprises 634 residues: DNA gyrase subunit B (634 aa).

Residues 416-530 (REIYIVEGDS…NGYIYIAMPP (115 aa)) form the Toprim domain. Mg(2+)-binding residues include E422, D495, and D497.

It belongs to the type II topoisomerase GyrB family. Heterotetramer, composed of two GyrA and two GyrB chains. In the heterotetramer, GyrA contains the active site tyrosine that forms a transient covalent intermediate with DNA, while GyrB binds cofactors and catalyzes ATP hydrolysis. It depends on Mg(2+) as a cofactor. Mn(2+) is required as a cofactor. Requires Ca(2+) as cofactor.

It is found in the cytoplasm. It carries out the reaction ATP-dependent breakage, passage and rejoining of double-stranded DNA.. In terms of biological role, a type II topoisomerase that negatively supercoils closed circular double-stranded (ds) DNA in an ATP-dependent manner to modulate DNA topology and maintain chromosomes in an underwound state. Negative supercoiling favors strand separation, and DNA replication, transcription, recombination and repair, all of which involve strand separation. Also able to catalyze the interconversion of other topological isomers of dsDNA rings, including catenanes and knotted rings. Type II topoisomerases break and join 2 DNA strands simultaneously in an ATP-dependent manner. The polypeptide is DNA gyrase subunit B (Borreliella burgdorferi (strain ATCC 35210 / DSM 4680 / CIP 102532 / B31) (Borrelia burgdorferi)).